The sequence spans 124 residues: MPKEQKEVRDLQEGNYVMIEDVPSKITSYSTSKPGKHGSAKARVEGTGVFDGQKRNFTQPVDAKVWVPIVNRKQGQVVSVSGDDMQVMDLETYETITMRIPEDLAPESDDEIEYLEFEGQRKVV.

The tract at residues 27 to 53 (TSYSTSKPGKHGSAKARVEGTGVFDGQ) is disordered. A Hypusine modification is found at K36.

Belongs to the eIF-5A family.

It is found in the cytoplasm. Functions by promoting the formation of the first peptide bond. The polypeptide is Translation initiation factor 5A (Natronomonas pharaonis (strain ATCC 35678 / DSM 2160 / CIP 103997 / JCM 8858 / NBRC 14720 / NCIMB 2260 / Gabara) (Halobacterium pharaonis)).